A 410-amino-acid chain; its full sequence is Divergent protein kinase domain 1C (410 aa).

At 1 to 19 (MARAAGERGRAARCGRWRR) the chain is on the cytoplasmic side. The May mediate ER retention signature appears at 18–19 (RR). The helical transmembrane segment at 20–40 (GALLAFAAWTAGWVLAAALLL) threads the bilayer. The Lumenal segment spans residues 41–410 (RAHPSVLSER…TLKELQEAEK (370 aa)).

This sequence belongs to the DIPK family. In terms of processing, among the many cysteines in the lumenal domain, most are probably involved in disulfide bonds. As to expression, mainly expressed in the brain and eye, some expression in kidney and skeletal muscle.

Its subcellular location is the endoplasmic reticulum membrane. This is Divergent protein kinase domain 1C (Dipk1c) from Mus musculus (Mouse).